We begin with the raw amino-acid sequence, 552 residues long: Steroid transmembrane transporter SLC22A24 (552 aa).

The next 12 helical transmembrane spans lie at 16–36, 146–166, 178–200, 204–226, 234–254, 260–280, 350–370, 380–400, 407–427, 435–455, 474–492, and 496–516; these read FQIC…PNIV, SMVQ…YGHL, LCFL…LVYC, FLAG…EWTL, IMVL…LAFA, ILQL…WKMV, VFGL…LILN, LFQI…LLTL, ISQI…TFLP, VVLA…ASVH, VSGR…LMAY, and LPWI…LLLP.

It belongs to the major facilitator (TC 2.A.1) superfamily. Organic cation transporter (TC 2.A.1.19) family. Localized to the kidney. Highly specific expression pattern in the nephron, localized to segment 3 of the proximal tubule.

The protein localises to the cell membrane. It catalyses the reaction estrone 3-sulfate(out) + glutarate(in) = estrone 3-sulfate(in) + glutarate(out). It carries out the reaction 17beta-estradiol 17-O-(beta-D-glucuronate)(out) + glutarate(in) = 17beta-estradiol 17-O-(beta-D-glucuronate)(in) + glutarate(out). The enzyme catalyses taurocholate(out) + glutarate(in) = taurocholate(in) + glutarate(out). The catalysed reaction is 5alpha-androstane-3alpha,17beta-diol 3-O-(beta-D-glucuronate)(out) + glutarate(in) = 5alpha-androstane-3alpha,17beta-diol 3-O-(beta-D-glucuronate)(in) + glutarate(out). It catalyses the reaction glycocholate(out) + glutarate(in) = glycocholate(in) + glutarate(out). It carries out the reaction dehydroepiandrosterone 3-sulfate(out) + glutarate(in) = dehydroepiandrosterone 3-sulfate(in) + glutarate(out). The enzyme catalyses glutarate(in) + succinate(out) = glutarate(out) + succinate(in). Transport is chloride sensitive and transtimulated by glutaric acid. Transport is inhibited by anionic compounds from different chemical classes. Its function is as follows. Renal transmembrane organic anion/dicarboxylate exchanger that participates in the reabsorption of conjugated steroids including estradiol-17beta-D-glucuronide (or 17beta-estradiol 17-O-(beta-D-glucuronate)), androstanediol glucuronide (or 5alpha-androstane-3alpha,17beta-diol 3-O-(beta-D-glucuronate)), and estrone 3-sulfate, as well as bile acids taurocholate and glycocholate, driven by an outward gradient of dicarboxylates such as glutarate or succinate. Functionally, similar uptake function as Isoform 1. Lack of transporter activity. This is Steroid transmembrane transporter SLC22A24 from Homo sapiens (Human).